Here is a 145-residue protein sequence, read N- to C-terminus: D-aminoacyl-tRNA deacylase (145 aa).

A Gly-cisPro motif, important for rejection of L-amino acids motif is present at residues 137 to 138; sequence GP.

Belongs to the DTD family. Homodimer.

Its subcellular location is the cytoplasm. It catalyses the reaction glycyl-tRNA(Ala) + H2O = tRNA(Ala) + glycine + H(+). The catalysed reaction is a D-aminoacyl-tRNA + H2O = a tRNA + a D-alpha-amino acid + H(+). Functionally, an aminoacyl-tRNA editing enzyme that deacylates mischarged D-aminoacyl-tRNAs. Also deacylates mischarged glycyl-tRNA(Ala), protecting cells against glycine mischarging by AlaRS. Acts via tRNA-based rather than protein-based catalysis; rejects L-amino acids rather than detecting D-amino acids in the active site. By recycling D-aminoacyl-tRNA to D-amino acids and free tRNA molecules, this enzyme counteracts the toxicity associated with the formation of D-aminoacyl-tRNA entities in vivo and helps enforce protein L-homochirality. The sequence is that of D-aminoacyl-tRNA deacylase from Pseudoalteromonas atlantica (strain T6c / ATCC BAA-1087).